Consider the following 507-residue polypeptide: tRNA-2-methylthio-N(6)-dimethylallyladenosine synthase (507 aa).

The region spanning 13–129 (RTYQVRTYGC…LPALLERARH (117 aa)) is the MTTase N-terminal domain. 6 residues coordinate [4Fe-4S] cluster: Cys22, Cys58, Cys92, Cys166, Cys170, and Cys173. The Radical SAM core domain maps to 152–388 (RESAYAAWVS…IALQESVTLE (237 aa)). The 72-residue stretch at 391–462 (QKQIGRMIEV…PHHLIADDGV (72 aa)) folds into the TRAM domain. Positions 459-478 (DDGVRSHRRTRAGDAHEAGK) are enriched in basic and acidic residues. The disordered stretch occupies residues 459 to 492 (DDGVRSHRRTRAGDAHEAGKKPSTPGIGLGMPAI).

It belongs to the methylthiotransferase family. MiaB subfamily. Monomer. Requires [4Fe-4S] cluster as cofactor.

The protein resides in the cytoplasm. It catalyses the reaction N(6)-dimethylallyladenosine(37) in tRNA + (sulfur carrier)-SH + AH2 + 2 S-adenosyl-L-methionine = 2-methylsulfanyl-N(6)-dimethylallyladenosine(37) in tRNA + (sulfur carrier)-H + 5'-deoxyadenosine + L-methionine + A + S-adenosyl-L-homocysteine + 2 H(+). In terms of biological role, catalyzes the methylthiolation of N6-(dimethylallyl)adenosine (i(6)A), leading to the formation of 2-methylthio-N6-(dimethylallyl)adenosine (ms(2)i(6)A) at position 37 in tRNAs that read codons beginning with uridine. In Mycobacteroides abscessus (strain ATCC 19977 / DSM 44196 / CCUG 20993 / CIP 104536 / JCM 13569 / NCTC 13031 / TMC 1543 / L948) (Mycobacterium abscessus), this protein is tRNA-2-methylthio-N(6)-dimethylallyladenosine synthase.